The sequence spans 550 residues: MSPTISHKDSSRQRRSGMFSHALDMKSGPLPPGGWDDSRRDSVGGEGDREVLLGDAGPGDLPKAPRSYRSELSSILLLLFLYVLQGIPLGLAGSIPLILQSKNVSYTDQAFFSFVFWPFSLKLLWAPLVDAVYFKNFGRRKSWLVPTQYTLGIFMIYLSTQVDRLLGNIDGRTPDVVALTVTFFLFEFLAATQDIAVDGWALTMLSRENVGYASTCNSVGQTAGYFLGNVLFLALESADFCNKYLRFQPQPRGIVTLSDFLFFWGTVFLITTTLVALLKKENREASIVKEETQGITDTYKLLFSIIKMPAVLAFCLLILTSKIGFSAADAVTGLKLVEEGVPKEHLALLAVPMVPLQIILPLLISKYTAGPQPLNIFYKAMPYRLLLGLEYALLVWWTPKVEHQGGFPLYYYIIVLLSYALHQVTLYSMYVSIMAFNAKVSDPLIGGTYMTLLNTVSNLGGNWPSTVALWLVDPLTVKECVGASNQNCRTPDAIELCKKLGGSCVTALDGYYVESIICVLIGFGWWFFLGPKFKKLQDEGPSSWKCKRNN.

Basic and acidic residues-rich tracts occupy residues Met-1–Arg-12 and Asp-36–Leu-52. Positions Met-1 to Pro-58 are disordered. Residues Met-1–Ser-74 are Cytoplasmic-facing. Ser-42 is modified (phosphoserine). The helical transmembrane segment at Ile-75 to Ile-95 threads the bilayer. The Extracellular segment spans residues Pro-96–Ser-113. The N-linked (GlcNAc...) asparagine glycan is linked to Asn-103. The chain crosses the membrane as a helical span at residues Phe-114–Phe-134. Over Lys-135 to Lys-141 the chain is Cytoplasmic. A helical membrane pass occupies residues Ser-142 to Val-162. Residues Asp-163–Asp-175 lie on the Extracellular side of the membrane. A helical membrane pass occupies residues Val-176–Ala-196. At Val-197–Asn-217 the chain is on the cytoplasmic side. Residues Ser-218–Ala-238 traverse the membrane as a helical segment. Residues Asp-239–Thr-256 are Extracellular-facing. A helical transmembrane segment spans residues Leu-257 to Leu-277. At Leu-278–Lys-300 the chain is on the cytoplasmic side. Residues Leu-301–Ser-321 traverse the membrane as a helical segment. Topologically, residues Lys-322–Glu-344 are extracellular. A helical membrane pass occupies residues His-345–Ser-365. The Cytoplasmic portion of the chain corresponds to Lys-366 to Asn-375. Residues Ile-376–Trp-396 form a helical membrane-spanning segment. The Extracellular portion of the chain corresponds to Trp-397 to Gly-405. The chain crosses the membrane as a helical span at residues Gly-406–Leu-426. At Tyr-427–Asp-509 the chain is on the cytoplasmic side. Residues Gly-510 to Gly-530 form a helical membrane-spanning segment. Over Pro-531 to Asn-550 the chain is Extracellular.

It belongs to the SLC33A transporter family. As to quaternary structure, homodimerizes. Expressed in all adult tissues examined including brain, heart, kidney, liver and spleen, with maximum expression in liver and kidney.

The protein localises to the endoplasmic reticulum membrane. It catalyses the reaction acetyl-CoA(in) = acetyl-CoA(out). In terms of biological role, acetyl-CoA transporter that mediates active acetyl-CoA import through the endoplasmic reticulum (ER) membrane into the ER lumen where specific ER-based acetyl-CoA:lysine acetyltransferases are responsible for the acetylation of ER-based protein substrate, such as BACE1. Necessary for O-acetylation of gangliosides. The protein is Acetyl-coenzyme A transporter 1 (Slc33a1) of Mus musculus (Mouse).